The chain runs to 576 residues: Proline--tRNA ligase (576 aa).

It belongs to the class-II aminoacyl-tRNA synthetase family. ProS type 1 subfamily. As to quaternary structure, homodimer.

The protein resides in the cytoplasm. It catalyses the reaction tRNA(Pro) + L-proline + ATP = L-prolyl-tRNA(Pro) + AMP + diphosphate. Catalyzes the attachment of proline to tRNA(Pro) in a two-step reaction: proline is first activated by ATP to form Pro-AMP and then transferred to the acceptor end of tRNA(Pro). As ProRS can inadvertently accommodate and process non-cognate amino acids such as alanine and cysteine, to avoid such errors it has two additional distinct editing activities against alanine. One activity is designated as 'pretransfer' editing and involves the tRNA(Pro)-independent hydrolysis of activated Ala-AMP. The other activity is designated 'posttransfer' editing and involves deacylation of mischarged Ala-tRNA(Pro). The misacylated Cys-tRNA(Pro) is not edited by ProRS. The sequence is that of Proline--tRNA ligase from Bordetella pertussis (strain Tohama I / ATCC BAA-589 / NCTC 13251).